The following is a 353-amino-acid chain: Rhodopsin (353 aa).

The Extracellular segment spans residues M1–K36. N-linked (GlcNAc...) asparagine glycosylation is found at N2 and N15. A helical membrane pass occupies residues Y37–V61. At T62 to N73 the chain is on the cytoplasmic side. The helical transmembrane segment at Y74 to Y96 threads the bilayer. The Extracellular segment spans residues T97 to C110. An intrachain disulfide couples C110 to C187. The helical transmembrane segment at S111–I133 threads the bilayer. Residues E134–Y136 carry the 'Ionic lock' involved in activated form stabilization motif. Topologically, residues E134–H152 are cytoplasmic. A helical membrane pass occupies residues A153–V173. Residues G174 to S202 lie on the Extracellular side of the membrane. The chain crosses the membrane as a helical span at residues Y203–G224. Residues R225–R252 are Cytoplasmic-facing. Residues M253–Y274 traverse the membrane as a helical segment. Residues I275–T286 lie on the Extracellular side of the membrane. The helical transmembrane segment at F287–L308 threads the bilayer. K296 is subject to N6-(retinylidene)lysine. At M309–A353 the chain is on the cytoplasmic side. Positions D330–A353 are disordered. The span at S336–A353 shows a compositional bias: low complexity.

This sequence belongs to the G-protein coupled receptor 1 family. Opsin subfamily. Phosphorylated on some or all of the serine and threonine residues present in the C-terminal region. In terms of processing, contains one covalently linked retinal chromophore. Short photoreceptor cells.

The protein localises to the membrane. It localises to the cell projection. The protein resides in the cilium. Its subcellular location is the photoreceptor outer segment. Its function is as follows. Photoreceptor required for image-forming vision at low light intensity. While most salt water fish species use retinal as chromophore, most freshwater fish use 3-dehydroretinal, or a mixture of retinal and 3-dehydroretinal. Light-induced isomerization of 11-cis to all-trans retinal triggers a conformational change that activates signaling via G-proteins. Subsequent receptor phosphorylation mediates displacement of the bound G-protein alpha subunit by arrestin and terminates signaling. The sequence is that of Rhodopsin (RHO) from Lethenteron camtschaticum (Japanese lamprey).